The sequence spans 362 residues: Transcriptional repressor PifC (362 aa).

Transcription repression of its own gene by binding to the PIF operator (pifO) and replication initiation from the primary origin (ori-1). Transcriptional repressor of the pifA and pifB. This chain is Transcriptional repressor PifC (pifC), found in Escherichia coli (strain K12).